A 292-amino-acid chain; its full sequence is RNA 5'-monophosphate methyltransferase (292 aa).

Residues 1–20 form a disordered region; the sequence is MAVPTELHGGSVKETAAEKE. S-adenosyl-L-methionine is bound by residues arginine 46, asparagine 76, aspartate 110, 135-136, and methionine 164; that span reads DF. Residues 53–274 enclose the Bin3-type SAM domain; sequence ELLRQLFPES…KQTIETHPIP (222 aa).

Belongs to the methyltransferase superfamily. As to quaternary structure, interacts with DICER1; the interaction may be mediated by RNA.

It is found in the cytoplasm. It catalyses the reaction a 5'-end 5'-phospho-ribonucleoside-RNA + S-adenosyl-L-methionine = a 5'-end (5'-methylphospho)-ribonucleoside-RNA + S-adenosyl-L-homocysteine. The enzyme catalyses a 5'-end 5'-phospho-ribonucleoside-RNA + 2 S-adenosyl-L-methionine = a 5'-end (5'-bismethylphospho)-ribonucleoside-RNA + 2 S-adenosyl-L-homocysteine. Functionally, O-methyltransferase that specifically monomethylates 5'-monophosphate of cytoplasmic histidyl tRNA (tRNA(His)), acting as a capping enzyme by protecting tRNA(His) from cleavage by DICER1. Also able, with less efficiently, to methylate the 5' monophosphate of a subset of pre-miRNAs, acting as a negative regulator of miRNA processing. The 5' monophosphate of pre-miRNAs is recognized by DICER1 and is required for pre-miRNAs processing: methylation at this position reduces the processing of pre-miRNAs by DICER1. Was also reported to mediate dimethylation of pre-miR-145; however dimethylation cannot be reproduced by another group which observes a monomethylation of pre-miR-145. In Pongo abelii (Sumatran orangutan), this protein is RNA 5'-monophosphate methyltransferase (BCDIN3D).